Here is a 529-residue protein sequence, read N- to C-terminus: UDP-glucuronosyltransferase 2B9 (529 aa).

A signal peptide spans 1 to 21; that stretch reads MSVKWTSVILLIQLSFYFSSG. N67, N68, and N88 each carry an N-linked (GlcNAc...) asparagine glycan. A helical membrane pass occupies residues 494 to 514; that stretch reads IGFLLACVATVIFVIMKCCLF.

Belongs to the UDP-glycosyltransferase family.

It localises to the microsome membrane. The protein localises to the endoplasmic reticulum membrane. It carries out the reaction glucuronate acceptor + UDP-alpha-D-glucuronate = acceptor beta-D-glucuronoside + UDP + H(+). UDPGT is of major importance in the conjugation and subsequent elimination of potentially toxic xenobiotics and endogenous compounds. This isozyme is active on C18, C19, and C21 steroids, bile acids, and several xenobiotics including eugenol, 1-naphthol, and p-nitrophenol. The polypeptide is UDP-glucuronosyltransferase 2B9 (UGT2B9) (Macaca fascicularis (Crab-eating macaque)).